A 247-amino-acid polypeptide reads, in one-letter code: Probable transcriptional regulatory protein GSU1074 (247 aa).

Belongs to the TACO1 family.

The protein localises to the cytoplasm. The chain is Probable transcriptional regulatory protein GSU1074 from Geobacter sulfurreducens (strain ATCC 51573 / DSM 12127 / PCA).